An 84-amino-acid chain; its full sequence is Large ribosomal subunit protein bL27 (84 aa).

A disordered region spans residues 1–21 (MATKKAGGSSRNGRDSAGRRL).

It belongs to the bacterial ribosomal protein bL27 family.

This chain is Large ribosomal subunit protein bL27, found in Pelagibacter ubique (strain HTCC1062).